A 254-amino-acid polypeptide reads, in one-letter code: Pyridoxine 5'-phosphate synthase (254 aa).

N12 contacts 3-amino-2-oxopropyl phosphate. 14–15 (DH) lines the 1-deoxy-D-xylulose 5-phosphate pocket. R23 contributes to the 3-amino-2-oxopropyl phosphate binding site. The Proton acceptor role is filled by H48. 1-deoxy-D-xylulose 5-phosphate is bound by residues R50 and H55. E75 serves as the catalytic Proton acceptor. T105 lines the 1-deoxy-D-xylulose 5-phosphate pocket. H199 acts as the Proton donor in catalysis. 3-amino-2-oxopropyl phosphate contacts are provided by residues G200 and 221-222 (GF).

This sequence belongs to the PNP synthase family. As to quaternary structure, homooctamer; tetramer of dimers.

The protein localises to the cytoplasm. It carries out the reaction 3-amino-2-oxopropyl phosphate + 1-deoxy-D-xylulose 5-phosphate = pyridoxine 5'-phosphate + phosphate + 2 H2O + H(+). It functions in the pathway cofactor biosynthesis; pyridoxine 5'-phosphate biosynthesis; pyridoxine 5'-phosphate from D-erythrose 4-phosphate: step 5/5. Functionally, catalyzes the complicated ring closure reaction between the two acyclic compounds 1-deoxy-D-xylulose-5-phosphate (DXP) and 3-amino-2-oxopropyl phosphate (1-amino-acetone-3-phosphate or AAP) to form pyridoxine 5'-phosphate (PNP) and inorganic phosphate. The chain is Pyridoxine 5'-phosphate synthase from Rhodopseudomonas palustris (strain ATCC BAA-98 / CGA009).